The following is a 224-amino-acid chain: UPF0441 protein PC1_0312 (224 aa).

The interval Pro-178–Gly-224 is disordered. Residues Arg-209 to Gly-224 show a composition bias toward low complexity.

The protein belongs to the UPF0441 family.

The polypeptide is UPF0441 protein PC1_0312 (Pectobacterium carotovorum subsp. carotovorum (strain PC1)).